The primary structure comprises 391 residues: Formate-dependent phosphoribosylglycinamide formyltransferase (391 aa).

N(1)-(5-phospho-beta-D-ribosyl)glycinamide is bound by residues 20-21 (EL) and Glu80. Residues Arg112, Lys153, 158–163 (SSGKGQ), 193–196 (EGFI), and Glu201 each bind ATP. In terms of domain architecture, ATP-grasp spans 117–306 (RLAAETLGLP…EFALHVRAIQ (190 aa)). Mg(2+)-binding residues include Glu265 and Glu277. Residues Asp284, Lys354, and 361 to 362 (RR) each bind N(1)-(5-phospho-beta-D-ribosyl)glycinamide.

This sequence belongs to the PurK/PurT family. In terms of assembly, homodimer.

The catalysed reaction is N(1)-(5-phospho-beta-D-ribosyl)glycinamide + formate + ATP = N(2)-formyl-N(1)-(5-phospho-beta-D-ribosyl)glycinamide + ADP + phosphate + H(+). The protein operates within purine metabolism; IMP biosynthesis via de novo pathway; N(2)-formyl-N(1)-(5-phospho-D-ribosyl)glycinamide from N(1)-(5-phospho-D-ribosyl)glycinamide (formate route): step 1/1. Functionally, involved in the de novo purine biosynthesis. Catalyzes the transfer of formate to 5-phospho-ribosyl-glycinamide (GAR), producing 5-phospho-ribosyl-N-formylglycinamide (FGAR). Formate is provided by PurU via hydrolysis of 10-formyl-tetrahydrofolate. The polypeptide is Formate-dependent phosphoribosylglycinamide formyltransferase (Shewanella baltica (strain OS185)).